Here is a 274-residue protein sequence, read N- to C-terminus: Thymidylate synthase (274 aa).

Residue Arg-21 coordinates dUMP. (6R)-5,10-methylene-5,6,7,8-tetrahydrofolate is bound at residue His-51. 123–124 (RR) lines the dUMP pocket. The active-site Nucleophile is the Cys-156. Residues 176-179 (RSAD), Asn-187, and 217-219 (HIY) each bind dUMP. (6R)-5,10-methylene-5,6,7,8-tetrahydrofolate is bound at residue Asp-179. Ser-273 provides a ligand contact to (6R)-5,10-methylene-5,6,7,8-tetrahydrofolate.

The protein belongs to the thymidylate synthase family. Bacterial-type ThyA subfamily. Homodimer.

It localises to the cytoplasm. The catalysed reaction is dUMP + (6R)-5,10-methylene-5,6,7,8-tetrahydrofolate = 7,8-dihydrofolate + dTMP. The protein operates within pyrimidine metabolism; dTTP biosynthesis. In terms of biological role, catalyzes the reductive methylation of 2'-deoxyuridine-5'-monophosphate (dUMP) to 2'-deoxythymidine-5'-monophosphate (dTMP) while utilizing 5,10-methylenetetrahydrofolate (mTHF) as the methyl donor and reductant in the reaction, yielding dihydrofolate (DHF) as a by-product. This enzymatic reaction provides an intracellular de novo source of dTMP, an essential precursor for DNA biosynthesis. The polypeptide is Thymidylate synthase (Francisella tularensis subsp. tularensis (strain SCHU S4 / Schu 4)).